The sequence spans 138 residues: Large ribosomal subunit protein uL16 (138 aa).

Over residues 1–17 (MLQPKRTKFRKQHKGRN) the composition is skewed to basic residues. A disordered region spans residues 1–22 (MLQPKRTKFRKQHKGRNRGVAT).

Belongs to the universal ribosomal protein uL16 family. As to quaternary structure, part of the 50S ribosomal subunit.

Binds 23S rRNA and is also seen to make contacts with the A and possibly P site tRNAs. The sequence is that of Large ribosomal subunit protein uL16 from Acidithiobacillus ferrooxidans (strain ATCC 23270 / DSM 14882 / CIP 104768 / NCIMB 8455) (Ferrobacillus ferrooxidans (strain ATCC 23270)).